The primary structure comprises 495 residues: Trimethylamine methyltransferase MttB (495 aa).

Residue O334 is a non-standard amino acid, pyrrolysine.

It belongs to the trimethylamine methyltransferase family. In terms of assembly, can form a complex with MttC.

It catalyses the reaction Co(I)-[trimethylamine-specific corrinoid protein] + trimethylamine + H(+) = methyl-Co(III)-[trimethylamine-specific corrinoid protein] + dimethylamine. The protein operates within one-carbon metabolism; methanogenesis from trimethylamine. In terms of biological role, catalyzes the transfer of a methyl group from trimethylamine to the corrinoid cofactor of MttC. The polypeptide is Trimethylamine methyltransferase MttB (Methanosarcina barkeri).